The primary structure comprises 226 residues: Enolase-phosphatase E1 (226 aa).

This sequence belongs to the HAD-like hydrolase superfamily. MasA/MtnC family. Monomer. Mg(2+) serves as cofactor.

The enzyme catalyses 5-methylsulfanyl-2,3-dioxopentyl phosphate + H2O = 1,2-dihydroxy-5-(methylsulfanyl)pent-1-en-3-one + phosphate. The protein operates within amino-acid biosynthesis; L-methionine biosynthesis via salvage pathway; L-methionine from S-methyl-5-thio-alpha-D-ribose 1-phosphate: step 3/6. It functions in the pathway amino-acid biosynthesis; L-methionine biosynthesis via salvage pathway; L-methionine from S-methyl-5-thio-alpha-D-ribose 1-phosphate: step 4/6. Bifunctional enzyme that catalyzes the enolization of 2,3-diketo-5-methylthiopentyl-1-phosphate (DK-MTP-1-P) into the intermediate 2-hydroxy-3-keto-5-methylthiopentenyl-1-phosphate (HK-MTPenyl-1-P), which is then dephosphorylated to form the acireductone 1,2-dihydroxy-3-keto-5-methylthiopentene (DHK-MTPene). The sequence is that of Enolase-phosphatase E1 from Alcanivorax borkumensis (strain ATCC 700651 / DSM 11573 / NCIMB 13689 / SK2).